Here is a 298-residue protein sequence, read N- to C-terminus: UDP-N-acetylenolpyruvoylglucosamine reductase (298 aa).

In terms of domain architecture, FAD-binding PCMH-type spans valine 27–glutamine 206. Residue arginine 171 is part of the active site. Serine 220 (proton donor) is an active-site residue. Glutamate 290 is a catalytic residue.

The protein belongs to the MurB family. FAD is required as a cofactor.

Its subcellular location is the cytoplasm. The enzyme catalyses UDP-N-acetyl-alpha-D-muramate + NADP(+) = UDP-N-acetyl-3-O-(1-carboxyvinyl)-alpha-D-glucosamine + NADPH + H(+). Its pathway is cell wall biogenesis; peptidoglycan biosynthesis. Cell wall formation. In Nitrosococcus oceani (strain ATCC 19707 / BCRC 17464 / JCM 30415 / NCIMB 11848 / C-107), this protein is UDP-N-acetylenolpyruvoylglucosamine reductase.